The primary structure comprises 191 residues: Rho-related GTP-binding protein RhoH (191 aa).

11–18 (GDSAVGKT) contacts GTP. The Effector region motif lies at 33-41 (YKPTVYENT). A GTP-binding site is contributed by 58-62 (DTAGN). The tract at residues 73-86 (YQQADVVLMCYSVA) is interaction with ZAP70. Residue 116–119 (TQTD) participates in GTP binding. C188 carries the cysteine methyl ester modification. A lipid anchor (S-geranylgeranyl cysteine) is attached at C188. Positions 189–191 (KIF) are cleaved as a propeptide — removed in mature form.

The protein belongs to the small GTPase superfamily. Rho family. In terms of assembly, interacts with GDI1 and GDI2. Interacts with ZAP70 (via SH2 domains) and the interaction is enhanced by its phosphorylation by LCK. Interacts with SYK and the interaction is enhanced by its phosphorylation by FYN. In terms of processing, phosphorylated on tyrosine by LCK. Phosphorylated by FYN. Phosphorylation enhances the interactions with ZAP70 and SYK and is critical for its function in thymocyte development. In terms of tissue distribution, expression is widespread in hematopoietic cells, including in bone marrow progenitor cells and in differentiated myeloid as well as lymphoid cells. Expressed at high levels in the thymus and mast cells, found in spleen and low-density bone marrow (LDBM) cells and is detected at a low level in neutrophils. In the thymus it is detected in thymocytes of the thymic cortex but not in non-lymphoid cells of fibrovascular and fibroadipose tissues. Expressed in T-cells, B-cells and mast cells.

It is found in the cytoplasm. The protein localises to the cell membrane. Binds GTP but lacks intrinsic GTPase activity and is resistant to Rho-specific GTPase-activating proteins. Inhibits the activation of NF-kappa-B by TNF and IKKB and the activation of CRK/p38 by TNF. Inhibits activities of RAC1, RHOA and CDC42. Negatively regulates leukotriene production in neutrophils. Negative regulator of hematopoietic progenitor cell proliferation, survival and migration. Critical regulator of thymocyte development and T-cell antigen receptor (TCR) signaling by mediating recruitment and activation of ZAP70. Required for phosphorylation of CD3Z, membrane translocation of ZAP70 and subsequent activation of the ZAP70-mediated pathways. Essential for efficient beta-selection and positive selection by promoting the ZAP70-dependent phosphorylation of the LAT signalosome during pre-TCR and TCR signaling. Crucial for thymocyte maturation during DN3 to DN4 transition and during positive selection. Plays critical roles in mast cell function by facilitating phosphorylation of SYK in Fc epsilon RI-mediated signal transduction. Essential for the phosphorylation of LAT, LCP2, PLCG1 and PLCG2 and for Ca(2+) mobilization in mast cells. The polypeptide is Rho-related GTP-binding protein RhoH (Rhoh) (Mus musculus (Mouse)).